The sequence spans 542 residues: Protein MGF 505-11L (542 aa).

The protein belongs to the asfivirus MGF 505 family.

Plays a role in virus cell tropism, and may be required for efficient virus replication in macrophages. This is Protein MGF 505-11L from African swine fever virus (isolate Warthog/Namibia/Wart80/1980) (ASFV).